The sequence spans 164 residues: Anterior gradient protein 2-B (164 aa).

The first 20 residues, 1–20 (MESVLKSLFVLLVATSFTLA), serve as a signal peptide directing secretion. 2 short sequence motifs (homodimer stabilization; interchain) span residues 34 to 43 (SRGWGDNLEW) and 49 to 56 (EGLYKAKA).

It belongs to the AGR family. As to quaternary structure, monomer and homodimer.

It localises to the secreted. Its subcellular location is the endoplasmic reticulum. This chain is Anterior gradient protein 2-B (agr2-b), found in Xenopus laevis (African clawed frog).